A 458-amino-acid chain; its full sequence is Ammonium transporter Rh type B (458 aa).

Residues 1–13 (MAGSPSRAAGRRL) are Cytoplasmic-facing. A helical membrane pass occupies residues 14–34 (QLPLLCLFLQGATAVLFAVFV). Residues 35–61 (RYNHKTDAALWHRSNHSNADNEFYFRY) lie on the Extracellular side of the membrane. N49 carries an N-linked (GlcNAc...) asparagine glycan. A helical membrane pass occupies residues 62–82 (PSFQDVHAMVFVGFGFLMVFL). Topologically, residues 83 to 86 (QRYG) are cytoplasmic. Residues 87 to 107 (FSSVGFTFLLAAFALQWSTLV) form a helical membrane-spanning segment. At 108 to 124 (QGFLHSFHGGHIHVGVE) the chain is on the extracellular side. The chain crosses the membrane as a helical span at residues 125 to 145 (SMINADFCAGAVLISFGAVLG). The Cytoplasmic segment spans residues 146–149 (KTGP). A helical transmembrane segment spans residues 150 to 170 (AQLLLMALLEVVLFGINEFVL). Over 171–178 (LHLLGVRD) the chain is Extracellular. A helical transmembrane segment spans residues 179-201 (AGGSMTIHTFGAYFGLVLSRVLY). The Cytoplasmic segment spans residues 202 to 219 (RPQLEKSKHRQGSVYHSD). Residues 220–240 (LFTMIGTIFLWIFWPSFNAAL) form a helical membrane-spanning segment. Residues 241–251 (TALGAGQHRTA) are Extracellular-facing. Residues 252-272 (LNTYYSLAASTLGTFALSALV) form a helical membrane-spanning segment. Residues 273 to 282 (GEDGRLDMVH) lie on the Cytoplasmic side of the membrane. A helical membrane pass occupies residues 283–303 (IQNAALTGGVVVGTSSKMMLT). Position 304 (P304) is a topological domain, extracellular. A helical membrane pass occupies residues 305 to 325 (FGALAAGFLAGTVSTLGYKFF). Residues 326–346 (TPILESKFKVQDTCGVHNLHG) lie on the Cytoplasmic side of the membrane. The chain crosses the membrane as a helical span at residues 347–367 (MPGVLGALLGVLVAGLATHEA). Topologically, residues 368–393 (YGDGLESVFPLIAEGQRSATSQAMHQ) are extracellular. A helical membrane pass occupies residues 394–414 (LFGLFVTLMFASVGGGLGGLL). Residues 415 to 458 (LKLPFLDSPPDSQCYEDQVHWQVPGEHEDKAQRPLRVEEADTYA) are Cytoplasmic-facing. The tract at residues 416–424 (KLPFLDSPP) is interaction with ANK3. A Basolateral sorting signal motif is present at residues 429–432 (YEDQ). The segment at 439–458 (GEHEDKAQRPLRVEEADTYA) is disordered.

The protein belongs to the ammonium transporter (TC 2.A.49) family. Rh subfamily. In terms of assembly, interacts (via C-terminus) with ANK2 and ANK3; required for targeting to the basolateral membrane. In terms of processing, N-glycosylated.

It is found in the cell membrane. The protein resides in the basolateral cell membrane. The catalysed reaction is NH4(+)(in) = NH4(+)(out). The enzyme catalyses methylamine(out) = methylamine(in). It catalyses the reaction CO2(out) = CO2(in). Functionally, ammonium transporter involved in the maintenance of acid-base homeostasis. Transports ammonium and its related derivative methylammonium across the basolateral plasma membrane of epithelial cells likely contributing to renal transepithelial ammonia transport and ammonia metabolism. May transport either NH4(+) or NH3 ammonia species predominantly mediating an electrogenic NH4(+) transport. May act as a CO2 channel providing for renal acid secretion. This Gorilla gorilla gorilla (Western lowland gorilla) protein is Ammonium transporter Rh type B (RHBG).